The following is a 252-amino-acid chain: Undecaprenyl-diphosphatase (252 aa).

A run of 7 helical transmembrane segments spans residues 1–21 (MTTL…FLPI), 42–62 (HKAF…FLYF), 74–94 (ILIA…IIKS), 95–115 (LFNP…LILI), 172–192 (AAEF…FYDV), 206–226 (NLIV…KWLL), and 232–252 (HSFI…YLWY).

This sequence belongs to the UppP family.

The protein resides in the cell inner membrane. The catalysed reaction is di-trans,octa-cis-undecaprenyl diphosphate + H2O = di-trans,octa-cis-undecaprenyl phosphate + phosphate + H(+). In terms of biological role, catalyzes the dephosphorylation of undecaprenyl diphosphate (UPP). Confers resistance to bacitracin. This Sulfurihydrogenibium sp. (strain YO3AOP1) protein is Undecaprenyl-diphosphatase.